Consider the following 75-residue polypeptide: Translational regulator CsrA (75 aa).

This sequence belongs to the CsrA/RsmA family. Homodimer; the beta-strands of each monomer intercalate to form a hydrophobic core, while the alpha-helices form wings that extend away from the core.

It is found in the cytoplasm. Functionally, a translational regulator that binds mRNA to regulate translation initiation and/or mRNA stability. Usually binds in the 5'-UTR at or near the Shine-Dalgarno sequence preventing ribosome-binding, thus repressing translation. Its main target seems to be the major flagellin gene, while its function is anatagonized by FliW. This is Translational regulator CsrA from Alkaliphilus metalliredigens (strain QYMF).